Here is a 154-residue protein sequence, read N- to C-terminus: Transcriptional repressor NrdR (154 aa).

The segment at 3–34 is a zinc-finger region; that stretch reads CPFCNAPDTKVIDSRLATEGAQVRRRRECMSC. The ATP-cone domain occupies 49–139; sequence PRVIKSDGNR…VYRSFQDVNA (91 aa).

The protein belongs to the NrdR family. Zn(2+) serves as cofactor.

Functionally, negatively regulates transcription of bacterial ribonucleotide reductase nrd genes and operons by binding to NrdR-boxes. The protein is Transcriptional repressor NrdR of Hydrogenovibrio crunogenus (strain DSM 25203 / XCL-2) (Thiomicrospira crunogena).